The following is a 185-amino-acid chain: Fimbrial subunit type 1 (185 aa).

Positions 1–22 (MRHKLMTSTIASLMFVAAAAVA) are cleaved as a signal peptide. Cysteine 46 and cysteine 86 are disulfide-bonded.

This sequence belongs to the fimbrial protein family.

The protein localises to the fimbrium. This chain is Fimbrial subunit type 1, found in Salmonella typhimurium.